The chain runs to 497 residues: Thiamine transporter 1 (497 aa).

At M1 the chain carries N-acetylmethionine. The Cytoplasmic portion of the chain corresponds to 1–28 (MDVPGPVSRRAAAAAATVLLRTARVRRE). Residues 29–46 (CWFLPTALLCAYGFFASL) form a helical membrane-spanning segment. Residues 47–72 (RPSEPFLTPYLLGPDKNLTEREVFNE) are Extracellular-facing. N-linked (GlcNAc...) asparagine glycosylation is present at N63. A helical transmembrane segment spans residues 73–91 (IYPVWTYSYLVLLFPVFLA). Residues 92 to 99 (TDYLRYKP) lie on the Cytoplasmic side of the membrane. Residues 100 to 118 (VVLLQGLSLIVTWFMLLYA) form a helical membrane-spanning segment. Topologically, residues 119 to 128 (QGLLAIQFLE) are extracellular. Residues 129 to 149 (FFYGIATATEIAYYSYIYSVV) form a helical membrane-spanning segment. The Cytoplasmic segment spans residues 150 to 165 (DLGMYQKVTSYCRSAT). Residues 166-185 (LVGFTVGSVLGQILVSVAGW) traverse the membrane as a helical segment. At 186 to 191 (SLFSLN) the chain is on the extracellular side. A helical membrane pass occupies residues 192-208 (VISLTCVSVAFAVAWFL). The Cytoplasmic segment spans residues 209-285 (PMPQKSLFFH…LLVLKVLWND (77 aa)). S222 carries the phosphoserine modification. A helical transmembrane segment spans residues 286 to 310 (FLMCYSSRPLLCWSVWWALSTCGYF). At 311-337 (QVVNYTQGLWEKVMPSRYAAIYNGGVE) the chain is on the extracellular side. N-linked (GlcNAc...) asparagine glycosylation is present at N314. Residues 338-354 (AVSTLLGAVAVFAVGYI) traverse the membrane as a helical segment. At 355 to 363 (KISWSTWGE) the chain is on the cytoplasmic side. Residues 364–380 (MTLSLFSLLIAAAVYIM) form a helical membrane-spanning segment. The Extracellular portion of the chain corresponds to 381–386 (DTVGNI). Residues 387–409 (WVCYASYVVFRIIYMLLITIATF) traverse the membrane as a helical segment. The Cytoplasmic portion of the chain corresponds to 410–419 (QIAANLSMER). The chain crosses the membrane as a helical span at residues 420–443 (YALVFGVNTFIALALQTLLTLIVV). Topologically, residues 444–455 (DASGLGLEITTQ) are extracellular. Residues 456–479 (FLIYASYFALIAVVFLASGAVSVM) traverse the membrane as a helical segment. Topologically, residues 480 to 497 (KKCRKLEDPQSSSQVTTS) are cytoplasmic.

This sequence belongs to the reduced folate carrier (RFC) transporter (TC 2.A.48) family. As to quaternary structure, interacts with TSPAN1; this interaction increases the stability of SLC19A2. Interacts with TMEM63B. As to expression, ubiquitous; most abundant in skeletal and cardiac muscle. Medium expression in placenta, heart, liver and kidney, low in lung.

The protein localises to the cell membrane. The catalysed reaction is thiamine(out) + H(+)(in) = thiamine(in) + H(+)(out). The enzyme catalyses pyridoxine(out) + n H(+)(out) = pyridoxine(in) + n H(+)(in). With respect to regulation, pyridoxine transport is inhibited by carbonyl cyanide p-trifluoromethoxyphenylhydrazone (FCCP) and carbonyl cyanide m-chlorophenylhydrazone (CCCP). High-affinity transporter for the intake of thiamine. Mediates H(+)-dependent pyridoxine transport. The chain is Thiamine transporter 1 (SLC19A2) from Homo sapiens (Human).